A 332-amino-acid chain; its full sequence is Ribosomal RNA small subunit methyltransferase H (332 aa).

S-adenosyl-L-methionine is bound by residues 42–44, aspartate 62, phenylalanine 86, aspartate 105, and glutamine 112; that span reads GGH.

The protein belongs to the methyltransferase superfamily. RsmH family.

It is found in the cytoplasm. The enzyme catalyses cytidine(1402) in 16S rRNA + S-adenosyl-L-methionine = N(4)-methylcytidine(1402) in 16S rRNA + S-adenosyl-L-homocysteine + H(+). In terms of biological role, specifically methylates the N4 position of cytidine in position 1402 (C1402) of 16S rRNA. The sequence is that of Ribosomal RNA small subunit methyltransferase H from Cupriavidus pinatubonensis (strain JMP 134 / LMG 1197) (Cupriavidus necator (strain JMP 134)).